Reading from the N-terminus, the 306-residue chain is Low density lipoprotein receptor adapter protein 1 (306 aa).

M1 carries the N-acetylmethionine modification. A Phosphoserine modification is found at S14. In terms of domain architecture, PID spans 44 to 168 (GMVFSLKYLG…VAQAFKVAFE (125 aa)). Positions 178 to 204 (EKREKANQEGGDVPGTRRDSTPSLKTS) are disordered. S197 and S200 each carry phosphoserine. Positions 210-214 (LLDLE) match the Clathrin box motif. Residues 247 to 274 (WELDDGLDEAFSRLAQSRTNPQVLDTGL) form an AP-2 complex binding region. The short motif at 255 to 264 (EAFSRLAQSR) is the [DE]-X(1,2)-F-X-X-[FL]-X-X-X-R motif element.

As to quaternary structure, interacts (via PID domain) with LDLR (via NPXY motifs). Binds to soluble clathrin trimers. Interacts with AP2B1; the interaction mediates the association with the AP-2 complex. Interacts with VLDLR. Interacts with LRP2.

It localises to the cytoplasm. Its function is as follows. Adapter protein (clathrin-associated sorting protein (CLASP)) required for efficient endocytosis of the LDL receptor (LDLR) in polarized cells such as hepatocytes and lymphocytes, but not in non-polarized cells (fibroblasts). May be required for LDL binding and internalization but not for receptor clustering in coated pits. May facilitate the endocytosis of LDLR and LDLR-LDL complexes from coated pits by stabilizing the interaction between the receptor and the structural components of the pits. May also be involved in the internalization of other LDLR family members. Binds to phosphoinositides, which regulate clathrin bud assembly at the cell surface. Required for trafficking of LRP2 to the endocytic recycling compartment which is necessary for LRP2 proteolysis, releasing a tail fragment which translocates to the nucleus and mediates transcriptional repression. The protein is Low density lipoprotein receptor adapter protein 1 of Rattus norvegicus (Rat).